We begin with the raw amino-acid sequence, 295 residues long: Phosphonoacetaldehyde hydrolase (295 aa).

Asp-36 (nucleophile) is an active-site residue. Residues Asp-36 and Ala-38 each coordinate Mg(2+). Lys-78 acts as the Schiff-base intermediate with substrate in catalysis. Position 212 (Asp-212) interacts with Mg(2+).

Belongs to the HAD-like hydrolase superfamily. PhnX family. Homodimer. Requires Mg(2+) as cofactor.

It catalyses the reaction phosphonoacetaldehyde + H2O = acetaldehyde + phosphate + H(+). Involved in phosphonate degradation. The chain is Phosphonoacetaldehyde hydrolase from Psychromonas ingrahamii (strain DSM 17664 / CCUG 51855 / 37).